Consider the following 784-residue polypeptide: Serine/threonine-protein kinase DCLK2 (784 aa).

The disordered stretch occupies residues 1-45; it reads MASTRSIELEHFEERDKRPRPGSRRGAPSSSGGSSSSGPKGNGLI. The span at 7–19 shows a compositional bias: basic and acidic residues; the sequence is IELEHFEERDKRP. The segment covering 24–39 has biased composition (low complexity); it reads RRGAPSSSGGSSSSGP. Residue threonine 61 is modified to Phosphothreonine. 2 consecutive Doublecortin domains span residues 72–158 and 197–280; these read KKAR…VDYT and KLVT…AQDD. Composition is skewed to low complexity over residues 300 to 312 and 341 to 364; these read AVKY…PGPS and TPSS…SPGS. The tract at residues 300–368 is disordered; it reads AVKYSGSKSP…PTSPGSFRGL (69 aa). Phosphoserine is present on serine 379. One can recognise a Protein kinase domain in the interval 411 to 668; sequence YKIGKVIGDG…AGEILSHPWV (258 aa). ATP contacts are provided by residues 417 to 425 and lysine 440; that span reads IGDGNFAVV. Catalysis depends on aspartate 532, which acts as the Proton acceptor. A Phosphoserine modification is found at serine 664. Threonine 683 carries the post-translational modification Phosphothreonine. Positions 724–784 are disordered; sequence CQDSSRPGME…RAGTWRRHRD (61 aa). Residues 741–758 are compositionally biased toward low complexity; that stretch reads SASAEEPPVSAPAAAPAP.

The protein belongs to the protein kinase superfamily. CAMK Ser/Thr protein kinase family. CaMK subfamily. In terms of assembly, binds to and stabilizes microtubules. Interacts with MAPK8IP1/JIP-1, MAPK8IP2/JIP-2, MAPK9/JNK2, PPP1R9B/NEURABIN-2 and actin. In terms of processing, autophosphorylated.

The protein resides in the cytoplasm. The protein localises to the cytoskeleton. It catalyses the reaction L-seryl-[protein] + ATP = O-phospho-L-seryl-[protein] + ADP + H(+). The catalysed reaction is L-threonyl-[protein] + ATP = O-phospho-L-threonyl-[protein] + ADP + H(+). In terms of biological role, protein kinase with a significantly reduced Ca(2+)/CAM affinity and dependence compared to other members of the CaMK family. May play a role in the down-regulation of CRE-dependent gene activation probably by phosphorylation of the CREB coactivator CRTC2/TORC2 and the resulting retention of TORC2 in the cytoplasm. In Ailuropoda melanoleuca (Giant panda), this protein is Serine/threonine-protein kinase DCLK2 (DCLK2).